The chain runs to 501 residues: WD repeat-containing protein wdr-5.3 (501 aa).

Disordered regions lie at residues 1 to 35 (MNPE…LESN), 58 to 85 (PIGV…YQSH), and 155 to 197 (KSAE…ITKK). Over residues 22 to 35 (PNQQSLQSRMLESN) the composition is skewed to polar residues. Polar residues predominate over residues 167–177 (SITTKPTSTIQ). WD repeat units follow at residues 211–241 (GHTK…KVWN), 253–283 (SHQL…KIFD), 295–325 (GHTN…RVWD), 337–367 (AHSD…RVWD), 381–410 (DHAP…KLWD), 422–455 (GHKN…LVWS), and 467–499 (GHTT…RIWR).

It belongs to the WD repeat WDR5/wds family.

In terms of biological role, not required for methylation of histone H3 'Lys-4'. The chain is WD repeat-containing protein wdr-5.3 (wdr-5.3) from Caenorhabditis elegans.